A 1040-amino-acid polypeptide reads, in one-letter code: Multidrug resistance protein MdtB (1040 aa).

Transmembrane regions (helical) follow at residues 25 to 45 (LLMA…PVAA), 347 to 367 (LMLA…NIPA), 369 to 389 (IIPG…MVFL), 396 to 416 (LTLM…IVVI), 440 to 460 (IGFT…PLLF), 472 to 492 (FAVT…TLTP), 537 to 557 (WLTL…WIVI), 863 to 883 (LGST…VLGV), 888 to 908 (FIHP…ALLA), 910 to 930 (IIAG…LIGI), 968 to 988 (ILMT…STGV), and 998 to 1018 (IAMV…TPVI).

This sequence belongs to the resistance-nodulation-cell division (RND) (TC 2.A.6) family. MdtB subfamily. As to quaternary structure, part of a tripartite efflux system composed of MdtA, MdtB and MdtC. MdtB forms a heteromultimer with MdtC.

The protein localises to the cell inner membrane. This Salmonella agona (strain SL483) protein is Multidrug resistance protein MdtB.